We begin with the raw amino-acid sequence, 266 residues long: MQIFKPASGHTHSTVQKSVVNKLNFYYGGYQALKNIDMMVYEKQVTALIGPSGCGKSTFLRCFNRMHDLYPRNHYEGEIILHPDNANILSPEVDPIEVRMRISMVFQKPNPFPKSIFENVAYGLRIRGVKRRSILEERVENALRNAALWEEVKDRLGDLAFNLSGGQQQRLCIARALATDPEILLFDEPTSALDPIATASIEELISDLRNKVTILIVTHNMQQAARVSDYTAYMYMGELIEFGATDTIFIKPKNKQTEDYITGRFG.

An ABC transporter domain is found at 15–261 (VQKSVVNKLN…PKNKQTEDYI (247 aa)). 50–57 (GPSGCGKS) provides a ligand contact to ATP.

The protein belongs to the ABC transporter superfamily. Phosphate importer (TC 3.A.1.7) family. The complex is composed of two ATP-binding proteins (PstB), two transmembrane proteins (PstC and PstA) and a solute-binding protein (PstS).

The protein resides in the cell inner membrane. It carries out the reaction phosphate(out) + ATP + H2O = ADP + 2 phosphate(in) + H(+). Functionally, part of the ABC transporter complex PstSACB involved in phosphate import. Responsible for energy coupling to the transport system. The sequence is that of Phosphate import ATP-binding protein PstB from Nitrosomonas europaea (strain ATCC 19718 / CIP 103999 / KCTC 2705 / NBRC 14298).